A 242-amino-acid polypeptide reads, in one-letter code: C-reactive protein 1.1 (242 aa).

A signal peptide spans 1–24 (MKTFHGPTCGTAVSLCLLLFLTSA). In terms of domain architecture, Pentraxin (PTX) spans 30-241 (ITSKVKFPPS…GVVLSPNEIC (212 aa)). Threonine 60 and tyrosine 63 together coordinate phosphocholine. Intrachain disulfides connect cysteine 62–cysteine 125 and cysteine 112–cysteine 144. 2 residues coordinate Ca(2+): aspartate 85 and asparagine 86. Residue asparagine 147 is glycosylated (N-linked (GlcNAc...) asparagine). Ca(2+)-binding residues include glutamine 169, aspartate 170, and glutamine 180. Cysteine 207 and cysteine 241 form a disulfide bridge.

It belongs to the pentraxin family. As to quaternary structure, homopentamer. Pentraxin (or pentaxin) have a discoid arrangement of 5 non-covalently bound subunits. Requires Ca(2+) as cofactor.

Its subcellular location is the secreted. Might serve the role of immunoglobulins. In Limulus polyphemus (Atlantic horseshoe crab), this protein is C-reactive protein 1.1.